We begin with the raw amino-acid sequence, 192 residues long: Orotate phosphoribosyltransferase (192 aa).

Residues R84, K88, and 110-118 (DDVLTTGNS) contribute to the 5-phospho-alpha-D-ribose 1-diphosphate site. 2 residues coordinate orotate: T114 and R142.

It belongs to the purine/pyrimidine phosphoribosyltransferase family. PyrE subfamily. As to quaternary structure, homodimer. It depends on Mg(2+) as a cofactor.

The enzyme catalyses orotidine 5'-phosphate + diphosphate = orotate + 5-phospho-alpha-D-ribose 1-diphosphate. The protein operates within pyrimidine metabolism; UMP biosynthesis via de novo pathway; UMP from orotate: step 1/2. Its function is as follows. Catalyzes the transfer of a ribosyl phosphate group from 5-phosphoribose 1-diphosphate to orotate, leading to the formation of orotidine monophosphate (OMP). In Pyrobaculum calidifontis (strain DSM 21063 / JCM 11548 / VA1), this protein is Orotate phosphoribosyltransferase.